Here is a 208-residue protein sequence, read N- to C-terminus: Large ribosomal subunit protein uL3 (208 aa).

A disordered region spans residues 117–149; that stretch reads GFQGAIKRHGQSRGPMAHGSRYHRRPGSMGPVA.

The protein belongs to the universal ribosomal protein uL3 family. As to quaternary structure, part of the 50S ribosomal subunit. Forms a cluster with proteins L14 and L19.

One of the primary rRNA binding proteins, it binds directly near the 3'-end of the 23S rRNA, where it nucleates assembly of the 50S subunit. The polypeptide is Large ribosomal subunit protein uL3 (Exiguobacterium sp. (strain ATCC BAA-1283 / AT1b)).